Consider the following 314-residue polypeptide: HTH-type transcriptional regulator LeuO (314 aa).

Residues 22–79 (VDLNLLTVFDAVMQEQNITRAAHVLGMSQPAVSNAVARLKVMFNDELFVRYGRGIQPT) enclose the HTH lysR-type domain. The H-T-H motif DNA-binding region spans 39 to 58 (ITRAAHVLGMSQPAVSNAVA).

This sequence belongs to the LysR transcriptional regulatory family.

A global transcription factor. Activates transcription of the 9 following operons; yjjQ-bglJ, yjjP, acrEF, ybdO, yjcRQP, casABCDE12, rhsD-ybbC, fepE and gltF, in most cases it probably interferes with silencing by H-NS and activates transcription. Represses transcription of the 3 following operons; uxaCA, sdaCB and btsT. H-NS repression of the bgl operon, leading to the ability to metabolize some beta-glucosides. It also directly activates the bgl operon. Activation is H-NS and BglJ-RcsB independent. The protein is HTH-type transcriptional regulator LeuO (leuO) of Escherichia coli (strain K12).